Consider the following 205-residue polypeptide: Putative 3-methyladenine DNA glycosylase (205 aa).

It belongs to the DNA glycosylase MPG family.

This is Putative 3-methyladenine DNA glycosylase from Bacillus cereus (strain ATCC 10987 / NRS 248).